A 571-amino-acid chain; its full sequence is Hsp70-Hsp90 organizing protein 2 (571 aa).

3 TPR repeats span residues 2–35, 37–69, and 70–103; these read ADEAKAKGNAAFSSGDFNSAVNHFTDAINLTPTN, VLFSNRSAAHASLNHYDEALSDAKKTVELKPDW, and GKGYSRLGAAHLGLNQFDEAVEAYSKGLEIDPSN. Positions 117–137 are disordered; it reads ASRSRASAPNPFGDAFQGPEM. Residues 134 to 173 enclose the STI1 1 domain; the sequence is GPEMWSKLTADPSTRGLLKQPDFVNMMKEIQRNPSNLNLY. The residue at position 168 (Ser168) is a Phosphoserine. Over residues 198–207 the composition is skewed to acidic residues; it reads DDMEIGEEEM. Residues 198 to 245 form a disordered region; the sequence is DDMEIGEEEMAVPSRKEPEVEKKRKPEPEPEPEPEFGEEKQKKLKAQK. Basic and acidic residues-rich tracts occupy residues 211-225 and 234-245; these read SRKEPEVEKKRKPEP and GEEKQKKLKAQK. The Bipartite nuclear localization signal motif lies at 240–257; the sequence is KLKAQKEKELGNAAYKKK. TPR repeat units lie at residues 243 to 276, 278 to 310, 322 to 355, 382 to 415, 417 to 449, and 450 to 483; these read AQKEKELGNAAYKKKDFETAIQHYSTAMEIDDED, SYITNRAAVHLEMGKYDECIKDCDKAVERGREL, TRKGTALGKMAKVSKDYEPVIQTYQKALTEHRNP, GDEEREKGNDFFKEQKYPDAVRHYTEAIKRNPKD, RAYSNRAACYTKLGAMPEGLKDAEKCIELDPTF, and LKGYSRKGAVQFFMKEYDNAMETYQKGLEHDPNN. The STI1 2 domain maps to 520–559; it reads DPEIQNILTDPVMRQVLSDLQENPAAAQKHMQNPMIMNKI.

As to quaternary structure, co-chaperone that forms a complex with HSP70 and HSP90 and preproteins (e.g. chloroplast preproteins). In terms of processing, phosphorylated. Acetylated.

The protein resides in the cytoplasm. It localises to the nucleus. Functionally, mediates the association of the molecular chaperones HSP70 and HSP90. Mediates nuclear encoded chloroplast preproteins binding to HSP90 prior to chloroplastic sorting. The protein is Hsp70-Hsp90 organizing protein 2 (HOP2) of Arabidopsis thaliana (Mouse-ear cress).